The following is a 139-amino-acid chain: Large ribosomal subunit protein uL16 (139 aa).

This sequence belongs to the universal ribosomal protein uL16 family. In terms of assembly, part of the 50S ribosomal subunit.

Its function is as follows. Binds 23S rRNA and is also seen to make contacts with the A and possibly P site tRNAs. The polypeptide is Large ribosomal subunit protein uL16 (Gloeothece citriformis (strain PCC 7424) (Cyanothece sp. (strain PCC 7424))).